The primary structure comprises 179 residues: ATP synthase subunit delta (179 aa).

The protein belongs to the ATPase delta chain family. F-type ATPases have 2 components, F(1) - the catalytic core - and F(0) - the membrane proton channel. F(1) has five subunits: alpha(3), beta(3), gamma(1), delta(1), epsilon(1). F(0) has three main subunits: a(1), b(2) and c(10-14). The alpha and beta chains form an alternating ring which encloses part of the gamma chain. F(1) is attached to F(0) by a central stalk formed by the gamma and epsilon chains, while a peripheral stalk is formed by the delta and b chains.

The protein localises to the cell inner membrane. F(1)F(0) ATP synthase produces ATP from ADP in the presence of a proton or sodium gradient. F-type ATPases consist of two structural domains, F(1) containing the extramembraneous catalytic core and F(0) containing the membrane proton channel, linked together by a central stalk and a peripheral stalk. During catalysis, ATP synthesis in the catalytic domain of F(1) is coupled via a rotary mechanism of the central stalk subunits to proton translocation. In terms of biological role, this protein is part of the stalk that links CF(0) to CF(1). It either transmits conformational changes from CF(0) to CF(1) or is implicated in proton conduction. The sequence is that of ATP synthase subunit delta from Maricaulis maris (strain MCS10) (Caulobacter maris).